The primary structure comprises 510 residues: Maturase K (510 aa).

This sequence belongs to the intron maturase 2 family. MatK subfamily.

The protein resides in the plastid. It localises to the chloroplast. Functionally, usually encoded in the trnK tRNA gene intron. Probably assists in splicing its own and other chloroplast group II introns. The chain is Maturase K from Populus alba (White poplar).